Consider the following 166-residue polypeptide: Probable dual specificity protein phosphatase H1 homolog (166 aa).

The Tyrosine-protein phosphatase domain occupies 25–166 (DITKITDYVY…FLNQIIDKYI (142 aa)). Cysteine 108 functions as the Phosphocysteine intermediate in the catalytic mechanism.

This sequence belongs to the protein-tyrosine phosphatase family. Non-receptor class dual specificity subfamily. As to quaternary structure, homodimer.

It is found in the virion. The protein localises to the host cytoplasm. It carries out the reaction O-phospho-L-tyrosyl-[protein] + H2O = L-tyrosyl-[protein] + phosphate. It catalyses the reaction O-phospho-L-seryl-[protein] + H2O = L-seryl-[protein] + phosphate. In terms of biological role, serine/Tyrosine phosphatase which down-regulates cellular antiviral response by dephosphorylating activated STAT1 and blocking interferon (IFN)-stimulated innate immune responses. This is Probable dual specificity protein phosphatase H1 homolog from Vertebrata (FPV).